The sequence spans 137 residues: Nucleoside diphosphate kinase (137 aa).

Residues Lys-10, Phe-58, Arg-86, Thr-92, Arg-103, and Asn-113 each coordinate ATP. His-116 functions as the Pros-phosphohistidine intermediate in the catalytic mechanism.

Belongs to the NDK family. Homotetramer. Mg(2+) is required as a cofactor.

Its subcellular location is the cytoplasm. The catalysed reaction is a 2'-deoxyribonucleoside 5'-diphosphate + ATP = a 2'-deoxyribonucleoside 5'-triphosphate + ADP. It catalyses the reaction a ribonucleoside 5'-diphosphate + ATP = a ribonucleoside 5'-triphosphate + ADP. In terms of biological role, major role in the synthesis of nucleoside triphosphates other than ATP. The ATP gamma phosphate is transferred to the NDP beta phosphate via a ping-pong mechanism, using a phosphorylated active-site intermediate. This Helicobacter pylori (strain Shi470) protein is Nucleoside diphosphate kinase.